A 132-amino-acid polypeptide reads, in one-letter code: Small ribosomal subunit protein uS8 (132 aa).

Belongs to the universal ribosomal protein uS8 family. In terms of assembly, part of the 30S ribosomal subunit. Contacts proteins S5 and S12.

Functionally, one of the primary rRNA binding proteins, it binds directly to 16S rRNA central domain where it helps coordinate assembly of the platform of the 30S subunit. This chain is Small ribosomal subunit protein uS8, found in Xylella fastidiosa (strain 9a5c).